The sequence spans 377 residues: Succinyl-diaminopimelate desuccinylase (377 aa).

Zn(2+) is bound at residue His-67. The active site involves Asp-69. Asp-100 serves as a coordination point for Zn(2+). Glu-134 serves as the catalytic Proton acceptor. Zn(2+)-binding residues include Glu-135, Glu-163, and His-349.

In terms of assembly, homodimer. Requires Zn(2+) as cofactor.

It catalyses the reaction N-succinyl-(2S,6S)-2,6-diaminopimelate + H2O = (2S,6S)-2,6-diaminopimelate + succinate. It functions in the pathway amino-acid biosynthesis; L-lysine biosynthesis via DAP pathway; LL-2,6-diaminopimelate from (S)-tetrahydrodipicolinate (succinylase route): step 3/3. Competitively inhibited by L,L-DAP, D,L-DAP, 2-carboxyethylphosphonic acid (CEPA) and 5-mercaptopentanoic acid (MSPA). Succinate is a poor inhibitor. Functionally, catalyzes the hydrolysis of N-succinyl-L,L-diaminopimelic acid (SDAP), forming succinate and LL-2,6-diaminopimelate (DAP), an intermediate involved in the bacterial biosynthesis of lysine and meso-diaminopimelic acid, an essential component of bacterial cell walls. It can only hydrolyze L,L-N-succinyl-diaminopimelic acid (L,L-SDAP) and is inactive toward D,L-, L,D-, and D,D-SDAP. In Haemophilus influenzae (strain ATCC 51907 / DSM 11121 / KW20 / Rd), this protein is Succinyl-diaminopimelate desuccinylase (dapE).